We begin with the raw amino-acid sequence, 942 residues long: Protein FAM184B (942 aa).

Disordered stretches follow at residues 1-26 and 73-97; these read MASALNSKIHPPGTCASSKADARGGS and QEDLQDTGAETRTRLPQEQSRTSED. Coiled coils occupy residues 89 to 150, 196 to 337, and 387 to 495; these read QEQS…RVLI, EMHQ…DRLM, and SETQ…SLLE. Positions 486–542 are disordered; the sequence is STKLQNSLLEDPCSRPKKPARDEGLEKLTDEEESSSDEEERTGESVKGKSDLQPPFE. The segment covering 504-513 has biased composition (basic and acidic residues); sequence PARDEGLEKL. Residues 514–526 are compositionally biased toward acidic residues; sequence TDEEESSSDEEER. 2 coiled-coil regions span residues 575 to 619 and 686 to 815; these read NKDS…ESLR and EKGL…ERRF. The tract at residues 880–934 is disordered; it reads APPITKSPSLDPSPSCSQPYKPTQLLDGKTASRTQDGEPAQPKEAPQKQGSPHQE. Residues 885–900 are compositionally biased toward polar residues; it reads KSPSLDPSPSCSQPYK.

It belongs to the FAM184 family.

This is Protein FAM184B (Fam184b) from Mus musculus (Mouse).